A 486-amino-acid chain; its full sequence is Cysteine--tRNA ligase (486 aa).

Residue Cys30 coordinates Zn(2+). Positions 32–42 (PTVYDRAHLGN) match the 'HIGH' region motif. The Zn(2+) site is built by Cys221, His246, and Glu250. The 'KMSKS' region signature appears at 279-283 (KMSKS). Residue Lys282 coordinates ATP.

Belongs to the class-I aminoacyl-tRNA synthetase family. As to quaternary structure, monomer. Zn(2+) serves as cofactor.

It is found in the cytoplasm. The enzyme catalyses tRNA(Cys) + L-cysteine + ATP = L-cysteinyl-tRNA(Cys) + AMP + diphosphate. In Cereibacter sphaeroides (strain ATCC 17025 / ATH 2.4.3) (Rhodobacter sphaeroides), this protein is Cysteine--tRNA ligase.